The sequence spans 325 residues: Lactonase drp35 (325 aa).

Ca(2+) contacts are provided by Glu46, Thr108, Gly110, Asp128, Thr131, Tyr133, Asp136, Asn183, Asp234, and Ser235. Asp234 functions as the Proton donor in the catalytic mechanism.

This sequence belongs to the SMP-30/CGR1 family. Ca(2+) serves as cofactor.

It is found in the cytoplasm. Functionally, exhibits lactonase activity. Acts in cells with perturbed membrane integrity and is possibly related to the membrane homeostasis. This is Lactonase drp35 (drp35) from Staphylococcus epidermidis (strain ATCC 12228 / FDA PCI 1200).